Here is a 76-residue protein sequence, read N- to C-terminus: cAMP-dependent protein kinase inhibitor alpha (76 aa).

An N-acetylthreonine modification is found at Thr2. The segment at 49-76 is disordered; it reads KTEGEDDGQRSSTEQSGEAQGEAAKSES.

The protein belongs to the PKI family. As to expression, present at high levels in skeletal muscle and brain but is present at lower levels in heart, testis and liver.

Its function is as follows. Extremely potent competitive inhibitor of cAMP-dependent protein kinase activity, this protein interacts with the catalytic subunit of the enzyme after the cAMP-induced dissociation of its regulatory chains. The polypeptide is cAMP-dependent protein kinase inhibitor alpha (Pkia) (Mus musculus (Mouse)).